The chain runs to 442 residues: Elongation factor 1-alpha (442 aa).

A tr-type G domain is found at Lys-5–Val-228. Residues Gly-14–Ser-21 form a G1 region. Residue Gly-14–Ser-21 coordinates GTP. The tract at residues Gly-70–Asp-74 is G2. The interval Asp-91 to Gly-94 is G3. GTP-binding positions include Asp-91–His-95 and Asn-153–Asp-156. Residues Asn-153 to Asp-156 are G4. The G5 stretch occupies residues Ser-192–Phe-194.

This sequence belongs to the TRAFAC class translation factor GTPase superfamily. Classic translation factor GTPase family. EF-Tu/EF-1A subfamily.

Its subcellular location is the cytoplasm. This protein promotes the GTP-dependent binding of aminoacyl-tRNA to the A-site of ribosomes during protein biosynthesis. This Entamoeba histolytica (strain ATCC 30459 / HM-1:IMSS / ABRM) protein is Elongation factor 1-alpha.